The following is a 476-amino-acid chain: NAD(+) hydrolase ThsA (476 aa).

A Deacetylase sirtuin-type domain is found at 4–283; sequence NPIVELFIKD…QRIENNIKTK (280 aa). NAD(+) contacts are provided by alanine 23, aspartate 114, and histidine 152. Histidine 152 functions as the Proton acceptor in the catalytic mechanism. Residues 284–476 are SLOG (STALD) domain, binds 3'cADPR; sequence TVFLSGSAVE…IIEFVEILSN (193 aa). 3'cADPR-binding residues include glycine 289, serine 290, leucine 326, phenylalanine 357, arginine 371, lysine 388, glycine 399, and glutamate 403.

This sequence belongs to the soluble Thoeris ThsA family. Homotetramer formed by dimer of dimers; homooctamers are occasionally seen. Not seen to interact with ThsB. In the absence of the signal generated by ThsB, 63% monomer and 20% homotetramer; in the presence of the ThsB signal product 40% of the protein is dimeric. Homotetramer in solution; probably dimerizes via the N-terminal sirtuin-like domain.

Its subcellular location is the cytoplasm. It catalyses the reaction NAD(+) + H2O = ADP-D-ribose + nicotinamide + H(+). Its activity is regulated as follows. Activated by a molecule generated by endogenous ThsB (AC J8G8J6) or ThsB' (AC J8CSK2); activation in vitro is 50-100x more sensitive to 3' cyclic ADP-D-ribose (3'cADPR) than 2'cADPR. 3'cADPR activates the NADase function of ThsA by binding to the SLOG domain, which changes its tetramer organization, allowing NAD to access the active site. Also activated by a signal molecule generated by B.dafuensis TIR1 (AC A0A5B8Z670) and TIR2 (AC A0A5B8Z260), and by BdTIR (AC I1GTC2), a plant protein involved in defense against bacterial infection. The signal produced by BdTIR is probably 2'cADPR, which activates this protein, the signal produced by endogenous ThsB' is probably 3'cADPR. Functionally, NAD(+) hydrolyzing component (NADase) of the Thoeris antiviral defense system, composed of ThsA and ThsB. Activated by a signal molecule generated by endogenous ThsB (AC J8G8J6) or ThsB' (AC J8CSK2, probably 3'cADPR), by TIR1 and TIR2 from B.dafuensis or by BdTIR from B.distachyon (AC I1GTC2, probably 2'cADPR). Upon activation binds and hydrolyzes NAD(+), leading to cell death and inhibition of phage replication. Not seen to bind DNA. Activation is 50-100x more sensitive to 3' cyclic ADP-D-ribose (3'cADPR) than 2'cADPR. In another paper ThsA is not activated by any tested cADPR isomer, although it binds 3'cADPR; it was suggested the protein is already in a fully active state. Expression of ThsA and ThsB in B.subtilis (strain BEST7003) confers resistance to phages phi29, SBSphiC, SBSphiJ and SPO1. At multiplicity of infection (MOI) of 0.05 Thoeris-encoding cultures grow normally when infected with SPO1, at MOI 5 cultures collapse prematurely by 90 minutes post-infection, thus the phage are not able to complete a replication cycle. NAD(+) levels fall and ADP-D-ribose levels rise 60 minutes post-infection. Thoeris cultures eventually recover, but retain the same susceptibility to SPO1. This Bacillus cereus (strain MSX-D12) protein is NAD(+) hydrolase ThsA.